The chain runs to 59 residues: MRCLPVFVILLLLIASAPSVDAQLKTKDDVPLASFHDNAKGTQHKRIINWCCLIFYQCC.

The N-terminal stretch at 1 to 22 (MRCLPVFVILLLLIASAPSVDA) is a signal peptide. Positions 23–44 (QLKTKDDVPLASFHDNAKGTQH) are excised as a propeptide. Cystine bridges form between cysteine 51-cysteine 58 and cysteine 52-cysteine 59.

Belongs to the conotoxin T superfamily. In terms of tissue distribution, expressed by the venom duct.

Its subcellular location is the secreted. Its function is as follows. Mu-conotoxins block voltage-gated sodium channels. This peptide inhibits the cardiac sodium channel hNav1.5/SCN5A (33% inhibition at 200 nM, 50% at 400 nM, and 55% at 600 nM). Does not interfere with the voltage-dependence of activation, but affects the voltage-dependence of inactivation of hNav1.5. In vivo, intracranial injection into 9-day-old mice causes transient symptoms, including extension of the body and clockwise and counter-clockwise turns, that last 3 to 4 minutes. Intracranial injection into 16-day-old mice, causes transient symptoms, including agitated breathing and occasional turning followed by scratching and grooming behavior, that last for 15-19 minutes. The protein is Mu-conotoxin SrVA of Conus spurius (Alphabet cone).